The chain runs to 107 residues: Phosphoribosyl-ATP pyrophosphatase (107 aa).

Belongs to the PRA-PH family.

It is found in the cytoplasm. It carries out the reaction 1-(5-phospho-beta-D-ribosyl)-ATP + H2O = 1-(5-phospho-beta-D-ribosyl)-5'-AMP + diphosphate + H(+). The protein operates within amino-acid biosynthesis; L-histidine biosynthesis; L-histidine from 5-phospho-alpha-D-ribose 1-diphosphate: step 2/9. In Bacillus cytotoxicus (strain DSM 22905 / CIP 110041 / 391-98 / NVH 391-98), this protein is Phosphoribosyl-ATP pyrophosphatase.